Here is a 554-residue protein sequence, read N- to C-terminus: Protein translocase subunit SecD (554 aa).

6 consecutive transmembrane segments (helical) span residues 10–30 (LVIL…MFYA), 392–412 (AGMV…IASY), 414–434 (LFGF…FAVM), 435–455 (GAIG…TIGT), 491–511 (AIID…VLGA), and 516–536 (GFAV…IWVV).

It belongs to the SecD/SecF family. SecD subfamily. As to quaternary structure, forms a complex with SecF. Part of the essential Sec protein translocation apparatus which comprises SecA, SecYEG and auxiliary proteins SecDF-YajC and YidC.

Its subcellular location is the cell inner membrane. Functionally, part of the Sec protein translocase complex. Interacts with the SecYEG preprotein conducting channel. SecDF uses the proton motive force (PMF) to complete protein translocation after the ATP-dependent function of SecA. This Rhodobacter capsulatus (strain ATCC BAA-309 / NBRC 16581 / SB1003) protein is Protein translocase subunit SecD.